Reading from the N-terminus, the 312-residue chain is Ribosomal protein L11 methyltransferase (312 aa).

The S-adenosyl-L-methionine site is built by Thr160, Gly181, Asp203, and Asn248.

The protein belongs to the methyltransferase superfamily. PrmA family.

Its subcellular location is the cytoplasm. It catalyses the reaction L-lysyl-[protein] + 3 S-adenosyl-L-methionine = N(6),N(6),N(6)-trimethyl-L-lysyl-[protein] + 3 S-adenosyl-L-homocysteine + 3 H(+). In terms of biological role, methylates ribosomal protein L11. The protein is Ribosomal protein L11 methyltransferase of Fusobacterium nucleatum subsp. nucleatum (strain ATCC 25586 / DSM 15643 / BCRC 10681 / CIP 101130 / JCM 8532 / KCTC 2640 / LMG 13131 / VPI 4355).